The primary structure comprises 165 residues: uncharacterized protein (165 aa).

This is an uncharacterized protein from Rickettsia conorii (strain ATCC VR-613 / Malish 7).